We begin with the raw amino-acid sequence, 32 residues long: Ranatuerin-2BYa (32 aa).

The cysteines at positions 27 and 32 are disulfide-linked.

Expressed by the skin glands.

The protein resides in the secreted. Its function is as follows. Antibacterial activity against Gram-positive bacterium S.aureus and Gram-negative bacterium E.coli. Weak hemolytic activity. This Rana boylii (Foothill yellow-legged frog) protein is Ranatuerin-2BYa.